The sequence spans 313 residues: Olfactory receptor 2B6 (313 aa).

The Extracellular segment spans residues 1–27; it reads MSWANESITGEFVLLGFSDQPWLEFPL. N-linked (GlcNAc...) asparagine glycosylation is present at asparagine 5. The chain crosses the membrane as a helical span at residues 28–48; the sequence is FVVFLTSYIVTIFGNLNIILV. Over 49–57 the chain is Cytoplasmic; it reads SHLDPKLHT. The chain crosses the membrane as a helical span at residues 58-78; the sequence is PMYFFLTNLSVIDLCYITCTV. Topologically, residues 79–97 are extracellular; sequence PQMLVNLRSIRKVISFGGC. Cysteine 97 and cysteine 189 are oxidised to a cystine. A helical membrane pass occupies residues 98-118; sequence VVQLFMFLALGATECVLLPVM. Residues 119-143 are Cytoplasmic-facing; that stretch reads SFDRFVAICRPLHYSVIMHQRLCLQ. A helical membrane pass occupies residues 144–164; that stretch reads LAAVSWIIGFGNSVWLSILTL. Residues 165–200 are Extracellular-facing; it reads QLPRCGHYVIDHFLCEVPALLKLSCVDVTANEAELF. The chain crosses the membrane as a helical span at residues 201–221; that stretch reads FVSVFFHLTPLSLILTSYAFI. The Cytoplasmic segment spans residues 222 to 244; that stretch reads ARAILKIQSAEGRQKAFGTCSSH. The chain crosses the membrane as a helical span at residues 245-265; that stretch reads LIVVSLFYGTALSVYFLPPSP. Topologically, residues 266–271 are extracellular; sequence HSKNRR. Residues 272 to 292 traverse the membrane as a helical segment; it reads KMVPLFYGIIAPMLNPLIYTL. Residues 293 to 313 lie on the Cytoplasmic side of the membrane; sequence RNKEVKDAFKRLIKRVFLSKN.

This sequence belongs to the G-protein coupled receptor 1 family.

Its subcellular location is the cell membrane. Odorant receptor. This Mus musculus (Mouse) protein is Olfactory receptor 2B6.